Consider the following 158-residue polypeptide: MRAPMTLKGVRRLRDELEHLKSVKRPEIINAIAEARAHGDLKENAEYHAAREQQSFIEGRIKQLEGELSHAEVIDVAKLNAGTKIVFGATVTLVDLETDEESRYQIVGDLEADIKQGLVAISSPVARALIGKQEGDTIVIEAPAGRREYEVVAVEYIS.

Residues 45–72 (AEYHAAREQQSFIEGRIKQLEGELSHAE) adopt a coiled-coil conformation.

Belongs to the GreA/GreB family.

In terms of biological role, necessary for efficient RNA polymerase transcription elongation past template-encoded arresting sites. The arresting sites in DNA have the property of trapping a certain fraction of elongating RNA polymerases that pass through, resulting in locked ternary complexes. Cleavage of the nascent transcript by cleavage factors such as GreA or GreB allows the resumption of elongation from the new 3'terminus. GreA releases sequences of 2 to 3 nucleotides. The polypeptide is Transcription elongation factor GreA (Xylella fastidiosa (strain 9a5c)).